We begin with the raw amino-acid sequence, 980 residues long: Ras and Rab interactor 3 (980 aa).

Residues 1–40 (MRRAEAPSSAHPAGPIPDAGKGEGEEDEEKDGTRLGLSTT) form a disordered region. The region spanning 63 to 158 (WLQLGLGQAE…LLPFTLRLPQ (96 aa)) is the SH2 domain. Residues 247–260 (PLPTGSYPPRPTPA) show a composition bias toward pro residues. 2 disordered regions span residues 247–496 (PLPT…TGAS) and 509–560 (QHLQ…LEFS). A compositionally biased stretch (low complexity) spans 261–271 (TPDATSPTSKG). The segment covering 274-308 (RRPPPPPPLPTVPPTGPARPLAPPVPPAGPLPNSP) has biased composition (pro residues). 2 stretches are compositionally biased toward polar residues: residues 406–422 (ISRT…TVSS) and 484–494 (QEASSEKQATG). Residues 514–523 (QSSSCPQSSP) are compositionally biased toward low complexity. Positions 584–729 (FASVFHAFLS…TTTDLGVTTS (146 aa)) are interaction with RAB5B. A VPS9 domain is found at 700–843 (HSRDGSLQQL…IKNYDKITVT (144 aa)). One can recognise a Ras-associating domain in the interval 865-962 (KARASRSSVQ…FHFVYRPQDS (98 aa)).

Belongs to the RIN (Ras interaction/interference) family. Interacts with CD2AP, RAB5B, RAB31 and BIN1.

It is found in the cytoplasm. It localises to the cytoplasmic vesicle. Its subcellular location is the early endosome. In terms of biological role, ras effector protein that functions as a guanine nucleotide exchange (GEF) for RAB5B and RAB31, by exchanging bound GDP for free GTP. Required for normal RAB31 function. The chain is Ras and Rab interactor 3 (Rin3) from Mus musculus (Mouse).